The sequence spans 445 residues: tRNA-2-methylthio-N(6)-dimethylallyladenosine synthase (445 aa).

The 121-residue stretch at 2 to 122 folds into the MTTase N-terminal domain; that stretch reads KKAFVKSYGC…LPDLLARSRE (121 aa). [4Fe-4S] cluster contacts are provided by cysteine 11, cysteine 47, cysteine 85, cysteine 157, cysteine 161, and cysteine 164. The region spanning 143-378 is the Radical SAM core domain; that stretch reads RTLGASAFLT…LDSQRHAYQR (236 aa). One can recognise a TRAM domain in the interval 378-440; that stretch reads RAAAGRVFDV…SNSLFGELVS (63 aa).

It belongs to the methylthiotransferase family. MiaB subfamily. In terms of assembly, monomer. It depends on [4Fe-4S] cluster as a cofactor.

It localises to the cytoplasm. It catalyses the reaction N(6)-dimethylallyladenosine(37) in tRNA + (sulfur carrier)-SH + AH2 + 2 S-adenosyl-L-methionine = 2-methylsulfanyl-N(6)-dimethylallyladenosine(37) in tRNA + (sulfur carrier)-H + 5'-deoxyadenosine + L-methionine + A + S-adenosyl-L-homocysteine + 2 H(+). Functionally, catalyzes the methylthiolation of N6-(dimethylallyl)adenosine (i(6)A), leading to the formation of 2-methylthio-N6-(dimethylallyl)adenosine (ms(2)i(6)A) at position 37 in tRNAs that read codons beginning with uridine. The polypeptide is tRNA-2-methylthio-N(6)-dimethylallyladenosine synthase (Methylobacterium radiotolerans (strain ATCC 27329 / DSM 1819 / JCM 2831 / NBRC 15690 / NCIMB 10815 / 0-1)).